The chain runs to 429 residues: Putative zinc metalloprotease aq_1964 (429 aa).

H17 provides a ligand contact to Zn(2+). E18 is an active-site residue. Residue H21 participates in Zn(2+) binding. Residues 88 to 110 (ILIALGGPLFNFLFTILVFALVY) form a helical membrane-spanning segment. The region spanning 189–265 (TIKVPNVQKG…AIKLKILRNG (77 aa)) is the PDZ domain. The next 2 helical transmembrane spans lie at 369 to 391 (IFNL…IEWL) and 406 to 428 (RVGL…LRLL).

It belongs to the peptidase M50B family. Requires Zn(2+) as cofactor.

Its subcellular location is the cell inner membrane. The chain is Putative zinc metalloprotease aq_1964 from Aquifex aeolicus (strain VF5).